Consider the following 208-residue polypeptide: Ribosome maturation factor RimP (208 aa).

A disordered region spans residues 165 to 208 (TAQPKKGQRQGKEPAKESGQKKQLAEAAPRSGSKRSERGSEKRK). Composition is skewed to basic and acidic residues over residues 174 to 188 (QGKEPAKESGQKKQL) and 198 to 208 (KRSERGSEKRK).

The protein belongs to the RimP family.

The protein resides in the cytoplasm. Its function is as follows. Required for maturation of 30S ribosomal subunits. The sequence is that of Ribosome maturation factor RimP from Sorangium cellulosum (strain So ce56) (Polyangium cellulosum (strain So ce56)).